The primary structure comprises 171 residues: Putative phosphoesterase ABC1741 (171 aa).

Residue His34 is the Proton donor of the active site. 2 consecutive short sequence motifs (HXTX) follow at residues 34-37 and 116-119; these read HITL and HITI. The active-site Proton acceptor is His116.

It belongs to the 2H phosphoesterase superfamily. YjcG family.

The polypeptide is Putative phosphoesterase ABC1741 (Shouchella clausii (strain KSM-K16) (Alkalihalobacillus clausii)).